We begin with the raw amino-acid sequence, 256 residues long: Alcohol dehydrogenase (256 aa).

12-35 (FVAGLGGIGLDTSREIVKAGPKNL) provides a ligand contact to NAD(+). Position 140 (Ser-140) interacts with substrate. Catalysis depends on Tyr-153, which acts as the Proton acceptor.

It belongs to the short-chain dehydrogenases/reductases (SDR) family. As to quaternary structure, homodimer.

The enzyme catalyses a primary alcohol + NAD(+) = an aldehyde + NADH + H(+). The catalysed reaction is a secondary alcohol + NAD(+) = a ketone + NADH + H(+). The polypeptide is Alcohol dehydrogenase (Adh) (Zaprionus tuberculatus (Vinegar fly)).